The chain runs to 414 residues: Na(+)/H(+) antiporter NhaA (414 aa).

11 consecutive transmembrane segments (helical) span residues 22 to 42, 61 to 81, 101 to 121, 131 to 151, 171 to 191, 215 to 235, 239 to 259, 281 to 301, 308 to 328, 343 to 363, and 379 to 399; these read VGGFLLIGGALTALIWANSPF, LHLTVEAWVADGLLAIFFFVV, MLPIVAAVCGMAVPALIYAAF, GWGIPMATDIAFAVAILAVVG, LGAIIVIAVFYTASLSFLPLI, SAALPNWVVYLPLAGVIWALV, GVHATIAGVAMGLLMRTVPLA, VLPVFAVMSAGVVFAGGLGAV, LGIIAGLVVGKTVGIAGGSWV, WIDITGMALLAGIGFTVSLLI, and KAGVLLASLLATVLGAVVLAV.

Belongs to the NhaA Na(+)/H(+) (TC 2.A.33) antiporter family.

It is found in the cell membrane. It carries out the reaction Na(+)(in) + 2 H(+)(out) = Na(+)(out) + 2 H(+)(in). Functionally, na(+)/H(+) antiporter that extrudes sodium in exchange for external protons. This is Na(+)/H(+) antiporter NhaA from Thermobifida fusca (strain YX).